Reading from the N-terminus, the 201-residue chain is Adenylyl-sulfate kinase (201 aa).

35–42 (GLSGSGKS) is a binding site for ATP. The active-site Phosphoserine intermediate is Ser109.

It belongs to the APS kinase family.

It catalyses the reaction adenosine 5'-phosphosulfate + ATP = 3'-phosphoadenylyl sulfate + ADP + H(+). Its pathway is sulfur metabolism; hydrogen sulfide biosynthesis; sulfite from sulfate: step 2/3. Functionally, catalyzes the synthesis of activated sulfate. The sequence is that of Adenylyl-sulfate kinase from Salmonella arizonae (strain ATCC BAA-731 / CDC346-86 / RSK2980).